Consider the following 441-residue polypeptide: ATP-dependent RNA helicase SUB2-1 (441 aa).

Residues 1–19 (MSHEGEEDLLEYSDNEQDI) show a composition bias toward acidic residues. The interval 1 to 46 (MSHEGEEDLLEYSDNEQDIQVDASKAAEPSELDATTAEDASNGDAE) is disordered. The Q motif motif lies at 57 to 85 (TGFKDFLLKPELARAIIDCGFEHPSEVQQ). The 176-residue stretch at 88 to 263 (IPQSIHGTDV…RRFLQNPLEI (176 aa)) folds into the Helicase ATP-binding domain. ATP is bound at residue 101-108 (AKSGLGKT). Residues 210 to 213 (DECD) carry the DECD box motif. The 146-residue stretch at 291–436 (KLAQLLDDLE…EFPEEGIDPS (146 aa)) folds into the Helicase C-terminal domain.

Belongs to the DEAD box helicase family. DECD subfamily.

It localises to the nucleus. The catalysed reaction is ATP + H2O = ADP + phosphate + H(+). In terms of biological role, ATP-binding RNA helicase involved in transcription elongation and required for the export of mRNA out of the nucleus. SUB2 also plays a role in pre-mRNA splicing and spliceosome assembly. May be involved in rDNA and telomeric silencing, and maintenance of genome integrity. The protein is ATP-dependent RNA helicase SUB2-1 (SUB2-1) of Vanderwaltozyma polyspora (strain ATCC 22028 / DSM 70294 / BCRC 21397 / CBS 2163 / NBRC 10782 / NRRL Y-8283 / UCD 57-17) (Kluyveromyces polysporus).